We begin with the raw amino-acid sequence, 679 residues long: Glycine--tRNA ligase beta subunit (679 aa).

Belongs to the class-II aminoacyl-tRNA synthetase family. As to quaternary structure, tetramer of two alpha and two beta subunits.

The protein resides in the cytoplasm. It catalyses the reaction tRNA(Gly) + glycine + ATP = glycyl-tRNA(Gly) + AMP + diphosphate. The polypeptide is Glycine--tRNA ligase beta subunit (Streptococcus pyogenes serotype M49 (strain NZ131)).